The chain runs to 282 residues: MFSWLPFSCALLLLQPLPARSLENAYTAEVGKNAYLPCSYTVPAPGTLVPICWGKGSCPLLQCASVVLRTDETNVTYRKSRRYQLKGNFYKGDMSLTIKNVTLADSGTYCCRIQFPGPMNDEKLELKLSITEPAKVIPAGTAHGDSTTASPRTLTTEGSGSETQTLVTLHDNNGTKISTWADEIKDSGETIRTAVHIGVGVSAGLALALILGVLILKWYSSKKKKLQDLSLITLANSPPGGLVNAGAGRIRSEENIYTIEENIYEMENSNEYYCYVSSQQPS.

The first 21 residues, 1–21 (MFSWLPFSCALLLLQPLPARS), serve as a signal peptide directing secretion. In terms of domain architecture, Ig-like V-type spans 22-131 (LENAYTAEVG…EKLELKLSIT (110 aa)). Residues 22–194 (LENAYTAEVG…KDSGETIRTA (173 aa)) lie on the Extracellular side of the membrane. 3 cysteine pairs are disulfide-bonded: Cys-38-Cys-111, Cys-52-Cys-63, and Cys-58-Cys-110. Gln-62 provides a ligand contact to a 1,2-diacyl-sn-glycero-3-phospho-L-serine. 2 N-linked (GlcNAc...) asparagine glycosylation sites follow: Asn-74 and Asn-100. Position 112 (Arg-112) interacts with a 1,2-diacyl-sn-glycero-3-phospho-L-serine. Residues Phe-115 and Gly-117 each coordinate Ca(2+). Met-119 contacts a 1,2-diacyl-sn-glycero-3-phospho-L-serine. Ca(2+) is bound at residue Asn-120. A disordered region spans residues 138 to 163 (PAGTAHGDSTTASPRTLTTEGSGSET). The span at 144-163 (GDSTTASPRTLTTEGSGSET) shows a compositional bias: polar residues. The O-linked (GalNAc...) threonine glycan is linked to Thr-147. Residue Asn-173 is glycosylated (N-linked (GlcNAc...) asparagine). Residues 195-215 (VHIGVGVSAGLALALILGVLI) traverse the membrane as a helical segment. Topologically, residues 216–282 (LKWYSSKKKK…YCYVSSQQPS (67 aa)) are cytoplasmic. The interaction with BAG6 stretch occupies residues 253-271 (EENIYTIEENIYEMENSNE). Tyr-257 bears the Phosphotyrosine; by ITK mark.

It belongs to the immunoglobulin superfamily. TIM family. In terms of assembly, interacts with HMGB1; impairs HMGB1 binding to B-DNA and likely HMGB1-mediated innate immune response. Interacts with BAG6. Interacts (phosphorylated) with PIK3R1 and PIK3R2. Interacts (not dependent on its phosphorylation status) with FYN. Interacts (in basal state T-cells) with VAV1; AKT1/2, LCP2, ZAP70, SYK, PIK3R1, FYN, SH3BP2 and SH2D2A. Interacts (in activated T-cells) with LCK and PLCG. Interacts with ILF3; this interaction promotes ILF3 ubiquitination and degradation.

The protein localises to the membrane. It is found in the cell junction. Its function is as follows. Cell surface receptor implicated in modulating innate and adaptive immune responses. Generally accepted to have an inhibiting function. Reports on stimulating functions suggest that the activity may be influenced by the cellular context and/or the respective ligand. Regulates macrophage activation. Inhibits T-helper type 1 lymphocyte (Th1)-mediated auto- and alloimmune responses and promotes immunological tolerance. In CD8+ cells attenuates TCR-induced signaling, specifically by blocking NF-kappaB and NFAT promoter activities resulting in the loss of IL-2 secretion. The function may implicate its association with LCK proposed to impair phosphorylation of TCR subunits. In contrast, shown to activate TCR-induced signaling in T-cells probably implicating ZAP70, LCP2, LCK and FYN. Expressed on Treg cells can inhibit Th17 cell responses. Receptor for LGALS9. Binding to LGALS9 is believed to result in suppression of T-cell responses; the resulting apoptosis of antigen-specific cells may implicate HAVCR2 phosphorylation and disruption of its association with BAG6. Binding to LGALS9 is proposed to be involved in innate immune response to intracellular pathogens. Expressed on Th1 cells interacts with LGALS9 expressed on Mycobacterium tuberculosis-infected macrophages to stimulate antibactericidal activity including IL-1 beta secretion and to restrict intracellular bacterial growth. However, the function as receptor for LGALS9 has been challenged. Also reported to enhance CD8+ T cell responses to an acute infection such as by Listeria monocytogenes. Receptor for phosphatidylserine (PtSer); PtSer-binding is calcium-dependent. May recognize PtSer on apoptotic cells leading to their phagocytosis. Mediates the engulfment of apoptotic cells by dendritic cells. Expressed on T-cells, promotes conjugation but not engulfment of apoptotic cells. Expressed on dendritic cells (DCs) positively regulates innate immune response and in synergy with Toll-like receptors promotes secretion of TNF-alpha. In tumor-imfiltrating DCs suppresses nucleic acid-mediated innate immune repsonse by interaction with HMGB1 and interfering with nucleic acid-sensing and trafficking of nucleid acids to endosomes. Can enhance mast cell production of Th2 cytokines Il-4, IL-6 and IL-13. Expressed on natural killer (NK) cells acts as a coreceptor to enhance IFN-gamma production in response to LGALS9. In contrast, shown to suppress NK cell-mediated cytotoxicity. Negatively regulates NK cell function in LPS-induced endotoxic shock. The sequence is that of Hepatitis A virus cellular receptor 2 homolog (Havcr2) from Rattus norvegicus (Rat).